Consider the following 682-residue polypeptide: 1,4-alpha-glucan-branching enzyme (682 aa).

Residues tryptophan 88 and lysine 124 each contribute to the (1,4-alpha-D-glucosyl)n site. The active-site Nucleophile is the aspartate 342. The Proton donor role is filled by glutamate 397.

Belongs to the glycosyl hydrolase 13 family. GlgB subfamily.

It localises to the cytoplasm. It carries out the reaction Transfers a segment of a (1-&gt;4)-alpha-D-glucan chain to a primary hydroxy group in a similar glucan chain.. It functions in the pathway glycan biosynthesis; glycogen biosynthesis. In terms of biological role, glycogen-branching enzyme participates in the glycogen biosynthetic process along with glycogenin and glycogen synthase. Generates alpha-1,6-glucosidic branches from alpha-1,4-linked glucose chains, to increase solubility of the glycogen polymer. The polypeptide is 1,4-alpha-glucan-branching enzyme (GLC3) (Cryptococcus neoformans var. neoformans serotype D (strain B-3501A) (Filobasidiella neoformans)).